The sequence spans 629 residues: Microtubule-associated protein 70-3 (629 aa).

Residues 1 to 54 (MEEGGYAFEVNNGRPTASEFGTTARISSPSLTMSSSFREGGGGGGSKGLTRRRS) are disordered. The segment covering 13 to 33 (GRPTASEFGTTARISSPSLTM) has biased composition (polar residues). Residues 75–375 (VKVELNRLEN…ADRAAKSEAQ (301 aa)) are a coiled coil. The interval 257 to 493 (ILDKLHRQKV…FPLNQSSEGT (237 aa)) is required for targeting to microtubules. Disordered regions lie at residues 391 to 421 (LRGP…LGGA), 458 to 519 (GTSR…DSVP), and 578 to 629 (AMEK…RSTQ). The segment covering 393–416 (GPSSSGNRSTPEGRSMSNGPSRRQ) has biased composition (polar residues). A coiled-coil region spans residues 544-592 (LRDKDEAIEMLAKKVETLTKAMEVEAKKMRREVAAMEKEVSAMRVDNKG). Positions 578 to 596 (AMEKEVSAMRVDNKGSDSR) are enriched in basic and acidic residues. Polar residues predominate over residues 603-613 (NSKGASTTAQL).

Belongs to the MAP70 family.

It is found in the cytoplasm. It localises to the cytoskeleton. Functionally, plant-specific protein that interact with microtubules. This chain is Microtubule-associated protein 70-3 (MAP70.3), found in Arabidopsis thaliana (Mouse-ear cress).